A 906-amino-acid chain; its full sequence is ATP-dependent DNA helicase DDX11 (906 aa).

One can recognise a Helicase ATP-binding domain in the interval 9-442; sequence GGIHFPFPFP…KNLMYIKQIL (434 aa). An ATP-binding site is contributed by 44-51; that stretch reads SPTGTGKS. Residues 78–111 are disordered; that stretch reads APGSGPPSSEKNSLLTSSSCQEPTDTPRPAGEPD. Residues 85–96 show a composition bias toward low complexity; sequence SSEKNSLLTSSS. Residue Ser-260 is modified to Phosphoserine. [4Fe-4S] cluster-binding residues include Cys-265 and Cys-283. Over residues 284-301 the composition is skewed to basic and acidic residues; sequence VDMQRSKREKNGTGEDKP. Positions 284–310 are disordered; sequence VDMQRSKREKNGTGEDKPKRKRQKIQT. Positions 312 and 347 each coordinate [4Fe-4S] cluster. The DEAH box signature appears at 390 to 393; sequence DEAH.

The protein belongs to the DEAD box helicase family. DEAH subfamily. DDX11/CHL1 sub-subfamily. Associates with the CTF18-RFC complex. Associates with a cohesin complex composed of RAD21, SMC1 proteins and SMC3. Interacts with CHTF18. Interacts with DSCC1. Interacts with FEN1; this interaction is direct and increases flap endonuclease activity of FEN1. Interacts with PCNA. Interacts with POLR1A and UBTF. Interacts with RAD21, SMC1 proteins and SMC3. Interacts with RFC2. Interacts with TIMELESS; this interaction increases recruitment of both proteins onto chromatin in response to replication stress induction by hydroxyurea. It depends on [4Fe-4S] cluster as a cofactor.

The protein resides in the nucleus. It localises to the nucleolus. It is found in the cytoplasm. The protein localises to the cytoskeleton. Its subcellular location is the spindle pole. The protein resides in the midbody. It localises to the microtubule organizing center. It is found in the centrosome. It carries out the reaction Couples ATP hydrolysis with the unwinding of duplex DNA at the replication fork by translocating in the 5'-3' direction. This creates two antiparallel DNA single strands (ssDNA). The leading ssDNA polymer is the template for DNA polymerase III holoenzyme which synthesizes a continuous strand.. The enzyme catalyses ATP + H2O = ADP + phosphate + H(+). Functionally, DNA-dependent ATPase and ATP-dependent DNA helicase that participates in various functions in genomic stability, including DNA replication, DNA repair and heterochromatin organization as well as in ribosomal RNA synthesis. Its double-stranded DNA helicase activity requires either a minimal 5'-single-stranded tail length of approximately 15 nt (flap substrates) or 10 nt length single-stranded gapped DNA substrates of a partial duplex DNA structure for helicase loading and translocation along DNA in a 5' to 3' direction. The helicase activity is capable of displacing duplex regions up to 100 bp, which can be extended up to 500 bp by the replication protein A (RPA) or the cohesion CTF18-replication factor C (Ctf18-RFC) complex activities. Also shows ATPase- and helicase activities on substrates that mimic key DNA intermediates of replication, repair and homologous recombination reactions, including forked duplex, anti-parallel G-quadruplex and three-stranded D-loop DNA molecules. Plays a role in DNA double-strand break (DSB) repair at the DNA replication fork during DNA replication recovery from DNA damage. Recruited with TIMELESS factor upon DNA-replication stress response at DNA replication fork to preserve replication fork progression, and hence ensure DNA replication fidelity. Also cooperates with TIMELESS factor during DNA replication to regulate proper sister chromatid cohesion and mitotic chromosome segregation. Stimulates 5'-single-stranded DNA flap endonuclease activity of FEN1 in an ATP- and helicase-independent manner; and hence it may contribute in Okazaki fragment processing at DNA replication fork during lagging strand DNA synthesis. Its ability to function at DNA replication fork is modulated by its binding to long non-coding RNA (lncRNA) cohesion regulator non-coding RNA DDX11-AS1/CONCR, which is able to increase both DDX11 ATPase activity and binding to DNA replicating regions. Also plays a role in heterochromatin organization. Involved in rRNA transcription activation through binding to active hypomethylated rDNA gene loci by recruiting UBTF and the RNA polymerase Pol I transcriptional machinery. Plays a role in embryonic development and prevention of aneuploidy. Involved in melanoma cell proliferation and survival. Associates with chromatin at DNA replication fork regions. Binds to single- and double-stranded DNAs. The polypeptide is ATP-dependent DNA helicase DDX11 (Mus musculus (Mouse)).